Here is a 432-residue protein sequence, read N- to C-terminus: Enolase (432 aa).

Gln-167 provides a ligand contact to (2R)-2-phosphoglycerate. The Proton donor role is filled by Glu-209. Positions 246, 291, and 318 each coordinate Mg(2+). 4 residues coordinate (2R)-2-phosphoglycerate: Lys-343, Arg-372, Ser-373, and Lys-394. Residue Lys-343 is the Proton acceptor of the active site.

This sequence belongs to the enolase family. Component of the RNA degradosome, a multiprotein complex involved in RNA processing and mRNA degradation. The cofactor is Mg(2+).

Its subcellular location is the cytoplasm. It is found in the secreted. The protein resides in the cell surface. It carries out the reaction (2R)-2-phosphoglycerate = phosphoenolpyruvate + H2O. Its pathway is carbohydrate degradation; glycolysis; pyruvate from D-glyceraldehyde 3-phosphate: step 4/5. Functionally, catalyzes the reversible conversion of 2-phosphoglycerate (2-PG) into phosphoenolpyruvate (PEP). It is essential for the degradation of carbohydrates via glycolysis. The polypeptide is Enolase (Aliivibrio fischeri (strain ATCC 700601 / ES114) (Vibrio fischeri)).